The sequence spans 940 residues: Isoleucine--tRNA ligase (940 aa).

The short motif at 58 to 68 is the 'HIGH' region element; it reads PYANGSIHIGH. Glu564 is a binding site for L-isoleucyl-5'-AMP. The 'KMSKS' region motif lies at 605 to 609; sequence KMSKS. An ATP-binding site is contributed by Lys608. Residues Cys903, Cys906, Cys923, and Cys926 each coordinate Zn(2+).

The protein belongs to the class-I aminoacyl-tRNA synthetase family. IleS type 1 subfamily. As to quaternary structure, monomer. Zn(2+) serves as cofactor.

It localises to the cytoplasm. It carries out the reaction tRNA(Ile) + L-isoleucine + ATP = L-isoleucyl-tRNA(Ile) + AMP + diphosphate. Catalyzes the attachment of isoleucine to tRNA(Ile). As IleRS can inadvertently accommodate and process structurally similar amino acids such as valine, to avoid such errors it has two additional distinct tRNA(Ile)-dependent editing activities. One activity is designated as 'pretransfer' editing and involves the hydrolysis of activated Val-AMP. The other activity is designated 'posttransfer' editing and involves deacylation of mischarged Val-tRNA(Ile). The polypeptide is Isoleucine--tRNA ligase (Shewanella woodyi (strain ATCC 51908 / MS32)).